A 542-amino-acid polypeptide reads, in one-letter code: Phenylacetone monooxygenase (542 aa).

FAD is bound by residues Ser-27, Glu-46, 54 to 57 (VWYW), Asp-66, Tyr-72, Val-119, and Gln-152. NADP(+) is bound at residue 64 to 66 (RCD). Residues 194–200 (TGSSGIQ), 217–218 (RT), and 336–337 (KR) contribute to the NADP(+) site. Met-446 contacts FAD. Trp-501 serves as a coordination point for NADP(+).

Belongs to the FAD-binding monooxygenase family. As to quaternary structure, monomer. It depends on FAD as a cofactor.

The catalysed reaction is phenylacetone + NADPH + O2 + H(+) = benzyl acetate + NADP(+) + H2O. In terms of biological role, catalyzes a Baeyer-Villiger oxidation reaction, i.e. the insertion of an oxygen atom into a carbon-carbon bond adjacent to a carbonyl, which converts ketones to esters. Is most efficient with phenylacetone as substrate, leading to the formation of benzyl acetate. Can also oxidize other aromatic ketones (benzylacetone, alpha-methylphenylacetone and 4-hydroxyacetophenone), some aliphatic ketones (dodecan-2-one and bicyclohept-2-en-6-one) and sulfides (e.g. methyl 4-tolylsulfide). This is Phenylacetone monooxygenase (pamO) from Thermobifida fusca (strain YX).